The primary structure comprises 294 residues: Zinc finger protein 346 (294 aa).

Methionine 1 is modified (N-acetylmethionine). The span at methionine 1–proline 19 shows a compositional bias: low complexity. The disordered stretch occupies residues methionine 1–arginine 35. The span at glycine 22 to arginine 35 shows a compositional bias: basic and acidic residues. A Matrin-type 1 zinc finger spans residues phenylalanine 70–tyrosine 104. Zn(2+)-binding residues include cysteine 75, cysteine 78, histidine 91, and histidine 97. Lysine 114 participates in a covalent cross-link: Glycyl lysine isopeptide (Lys-Gly) (interchain with G-Cter in SUMO2). The Matrin-type 2 zinc finger occupies aspartate 131–lysine 165. Zn(2+)-binding residues include cysteine 136, cysteine 139, histidine 152, and histidine 158. A Glycyl lysine isopeptide (Lys-Gly) (interchain with G-Cter in SUMO2) cross-link involves residue lysine 170. Matrin-type zinc fingers lie at residues aspartate 182–leucine 216 and glycine 236–threonine 270. The segment at lysine 269–aspartate 294 is disordered.

Forms a heteromeric complex with XPO5 and ILF3. Found in a nuclear export complex with XPO5, RAN, ILF3, ZNF346 and double-stranded RNA. Interacts with XPO5. Interacts with ILF3 in an RNA-independent manner. As to expression, expressed in all tissues tested, including heart, brain, spleen, lung, liver, muscle, kidney and testis. Exogenous expression induced apoptosis.

The protein localises to the nucleus. Its subcellular location is the nucleolus. It is found in the cytoplasm. Its function is as follows. Binds with low affinity to dsDNA and ssRNA, and with high affinity to dsRNA, with no detectable sequence specificity. May bind to specific miRNA hairpins. The chain is Zinc finger protein 346 (Znf346) from Mus musculus (Mouse).